We begin with the raw amino-acid sequence, 510 residues long: Inositol-3-phosphate synthase (510 aa).

24 residues coordinate NAD(+): Gly-70, Gly-71, Asn-72, Asn-73, Asp-143, Ile-180, Gln-190, Arg-193, Thr-230, Ala-231, Asn-232, Thr-233, Gly-281, Ser-282, Asp-306, Ser-309, Asn-340, Asn-341, Asp-342, Lys-355, Gly-393, Asp-394, Asp-422, and Ser-423.

Belongs to the myo-inositol 1-phosphate synthase family. It depends on NAD(+) as a cofactor.

It localises to the cytoplasm. The protein localises to the cytosol. It is found in the nucleus. It catalyses the reaction D-glucose 6-phosphate = 1D-myo-inositol 3-phosphate. It participates in polyol metabolism; myo-inositol biosynthesis; myo-inositol from D-glucose 6-phosphate: step 1/2. Its function is as follows. Key enzyme in myo-inositol biosynthesis pathway that catalyzes the conversion of glucose 6-phosphate to 1-myo-inositol 1-phosphate in a NAD-dependent manner. This Spirodela polyrhiza (Giant duckweed) protein is Inositol-3-phosphate synthase (TUR1).